The primary structure comprises 153 residues: MKRKKSREMTMQLLFEMMIKKENYVEIINTLKEALTEEEDINSILGEKKEMDEERIDLDEVDLEYLIHTLKGVEENSKVLDEHIEKYLKNWTLNRLAKVDLAILRLCSYEILFSNEVPDNVAINEGVELAKKYGDDKSPAFINAVLDKIAKQM.

It belongs to the NusB family.

Its function is as follows. Involved in transcription antitermination. Required for transcription of ribosomal RNA (rRNA) genes. Binds specifically to the boxA antiterminator sequence of the ribosomal RNA (rrn) operons. This is Transcription antitermination protein NusB from Clostridium tetani (strain Massachusetts / E88).